Here is a 485-residue protein sequence, read N- to C-terminus: Glutamyl-tRNA(Gln) amidotransferase subunit A (485 aa).

Catalysis depends on charge relay system residues Lys-79 and Ser-154. Catalysis depends on Ser-178, which acts as the Acyl-ester intermediate.

Belongs to the amidase family. GatA subfamily. In terms of assembly, heterotrimer of A, B and C subunits.

The catalysed reaction is L-glutamyl-tRNA(Gln) + L-glutamine + ATP + H2O = L-glutaminyl-tRNA(Gln) + L-glutamate + ADP + phosphate + H(+). Its function is as follows. Allows the formation of correctly charged Gln-tRNA(Gln) through the transamidation of misacylated Glu-tRNA(Gln) in organisms which lack glutaminyl-tRNA synthetase. The reaction takes place in the presence of glutamine and ATP through an activated gamma-phospho-Glu-tRNA(Gln). The chain is Glutamyl-tRNA(Gln) amidotransferase subunit A from Staphylococcus aureus.